The chain runs to 493 residues: GPI alpha-1,6-mannosyltransferase 2 (493 aa).

At 1–13 the chain is on the cytoplasmic side; the sequence is MGLLDPSQKEVLR. Residues 14–34 traverse the membrane as a helical segment; it reads FAVNCRILTLVLQALFNLIIP. Over 35–77 the chain is Lumenal; the sequence is DHHADAFCPPRLAPSGSADQLVEGLLGGLSRWDAEHFLFIAEH. The helical transmembrane segment at 78–98 threads the bilayer; sequence GYLYEHNFAFFPGFPLALLMG. Residues 99–113 are Cytoplasmic-facing; it reads TELLRPLQGLLSQRS. The chain crosses the membrane as a helical span at residues 114 to 134; it reads CLLVSVALLNLLFSVLAAVAL. Over 135–136 the chain is Lumenal; that stretch reads HD. Residues 137–157 form a helical membrane-spanning segment; sequence LGCLVLHCPRQALCAALLFCI. The Cytoplasmic segment spans residues 158 to 161; the sequence is SPAN. Residues 162-182 form a helical membrane-spanning segment; the sequence is VFLAAGYSEALFAFLTFSAMG. The Lumenal portion of the chain corresponds to 183 to 192; that stretch reads QLERGRGWAS. Residues 193–213 form a helical membrane-spanning segment; sequence GLLFALAAGVRSNGLVSLGFL. The Cytoplasmic portion of the chain corresponds to 214 to 234; it reads LHSQCRGFCSSLAVLSPWKPL. Residues 235–255 traverse the membrane as a helical segment; sequence VKLMASVCLSVLIVSLPFALF. Topologically, residues 256–327 are lumenal; it reads QYRAYIQFCS…RYYELKQVPN (72 aa). Residues 328-348 traverse the membrane as a helical segment; that stretch reads FLLATPVTVLVVWATWTYVTT. Over 349–378 the chain is Cytoplasmic; sequence HPWLCLTLGLQRTKDRENPEKPHRGFLSPK. The helical transmembrane segment at 379–399 threads the bilayer; that stretch reads VFVYLVHAAALLVFGGLCMHV. The Lumenal segment spans residues 400-469; that stretch reads QVLTRFLASS…DWKRCSPVTR (70 aa). The helical transmembrane segment at 470-490 threads the bilayer; it reads CVLVYFLTYWLLGLILHCNFL. The Cytoplasmic segment spans residues 491-493; it reads PWT.

It belongs to the PIGV family. In terms of processing, not N-glycosylated.

It is found in the endoplasmic reticulum membrane. It functions in the pathway glycolipid biosynthesis; glycosylphosphatidylinositol-anchor biosynthesis. Functionally, alpha-1,6-mannosyltransferase that catalyzes the transfer of the second mannose, via an alpha-1,6 bond, from a dolichol-phosphate-mannose (Dol-P-Man) to the alpha-D-Man-(1-&gt;4)-alpha-D-GlcN-(1-&gt;6)-(1-radyl,2-acyl-sn-glycero-3-phospho)-2-acyl-inositol (also termed H2) intermediate to generate an alpha-D-Man-(1-&gt;6)-alpha-D-Man-(1-&gt;4)-alpha-D-GlcN-(1-&gt;6)-(1-radyl,2-acyl-sn-glycero-3-phospho)-2-acyl-inositol (also termed H3) and participates in the seventh step of the glycosylphosphatidylinositol-anchor biosynthesis. Also transfers the second mannose on a 2-PEtn-alpha-D-Man-(1-&gt;4)-alpha-D-GlcN-(1-&gt;6)-(1-radyl,2-acyl-sn-glycero-3-phospho)-2-acyl-inositol (also termed H5). The chain is GPI alpha-1,6-mannosyltransferase 2 from Mus musculus (Mouse).